The sequence spans 2121 residues: Non-reducing polyketide synthase aoiG (2121 aa).

The Starter acyltransferase (SAT) domain occupies 5 to 258; the sequence is YIFGDQTVRV…LPVSIYAPYH (254 aa). The Ketosynthase family 3 (KS3) domain occupies 386-817; that stretch reads SSKIAIIGFS…GGNTAVLVED (432 aa). Active-site for beta-ketoacyl synthase activity residues include Cys-558, His-693, and His-735. The Malonyl-CoA:ACP transacylase (MAT) domain occupies 921-1239; that stretch reads FLFTGQGAQQ…LSVLHLAGVR (319 aa). An N-terminal hotdog fold region spans residues 1302-1433; sequence QKILEEEMTA…CTIELQRPHQ (132 aa). A PKS/mFAS DH domain is found at 1302-1608; it reads QKILEEEMTA…FQKVARRVLE (307 aa). The active-site Proton acceptor; for dehydratase activity is the His-1334. A C-terminal hotdog fold region spans residues 1461-1608; that stretch reads THKMRRGVAY…FQKVARRVLE (148 aa). The Proton donor; for dehydratase activity role is filled by Asp-1519. The Carrier 1 domain occupies 1646 to 1723; sequence PHVEDAWQQV…SLRIYLNMSS (78 aa). Residue Ser-1683 is modified to O-(pantetheine 4'-phosphoryl)serine. Positions 1728–1752 are enriched in low complexity; that stretch reads DSIETSSYPTPDESTTTTITSPSGS. The interval 1728 to 1760 is disordered; sequence DSIETSSYPTPDESTTTTITSPSGSDRNVGRNS. Positions 1763-1840 constitute a Carrier 2 domain; that stretch reads DGVGTTVGLV…AITAALHAIF (78 aa). Ser-1800 carries the post-translational modification O-(pantetheine 4'-phosphoryl)serine. Residues 1872–1976 form a TE/CLC (thioesterase/Claisen cyclase) domain region; the sequence is TLFLFPDGSG…ILIDSPNPMG (105 aa).

Requires pantetheine 4'-phosphate as cofactor.

Functionally, non-reducing polyketide synthase; part of the gene cluster that mediates the biosynthesis of a methylated derivative of known natural products orthosporin and diaporthin. AoiG catalyzes the biosynthesis of the hexaketide isocoumarin scaffold, via condensation of one acetyl-CoA starter unit with 6 malonyl-CoA units. An oxidoreductase that has still to be identified catalyzes the stereospecific reduction of the carbonyl moiety of the hexaketide isocoumarin scaffold to generate the S-configured secondary alcohol at C-11 of orthosporin. The methyltrasferase aoiF then catalyzes the biotransformation of not only orthosporin to diaporthin but also diaporthin to the final product, by performing a tandem methylation of the polyketide core. This Aspergillus oryzae (strain ATCC 42149 / RIB 40) (Yellow koji mold) protein is Non-reducing polyketide synthase aoiG.